Here is a 213-residue protein sequence, read N- to C-terminus: tRNA (guanine-N(7)-)-methyltransferase (213 aa).

Residues E44, E69, N96, and D118 each coordinate S-adenosyl-L-methionine. D118 is a catalytic residue. K122 provides a ligand contact to substrate. An interaction with RNA region spans residues 124 to 129 (RHEKRR). Residues D154 and 191 to 194 (TEYE) contribute to the substrate site.

Belongs to the class I-like SAM-binding methyltransferase superfamily. TrmB family.

The catalysed reaction is guanosine(46) in tRNA + S-adenosyl-L-methionine = N(7)-methylguanosine(46) in tRNA + S-adenosyl-L-homocysteine. It functions in the pathway tRNA modification; N(7)-methylguanine-tRNA biosynthesis. Catalyzes the formation of N(7)-methylguanine at position 46 (m7G46) in tRNA. The chain is tRNA (guanine-N(7)-)-methyltransferase from Bacillus licheniformis (strain ATCC 14580 / DSM 13 / JCM 2505 / CCUG 7422 / NBRC 12200 / NCIMB 9375 / NCTC 10341 / NRRL NRS-1264 / Gibson 46).